A 362-amino-acid polypeptide reads, in one-letter code: Protein mom-2 (362 aa).

A signal peptide spans 1–24; the sequence is MHINTPVLLAIIYFLVFAPKSADA. 5 disulfide bridges follow: Cys-80-Cys-91, Cys-129-Cys-137, Cys-139-Cys-167, Cys-217-Cys-231, and Cys-219-Cys-226. An N-linked (GlcNAc...) asparagine glycan is attached at Asn-90. A lipid anchor (O-palmitoleoyl serine; by mom-1) is attached at Ser-223. The disordered stretch occupies residues 263-282; that stretch reads TVRSSPSAGSSGRSERFARN. A compositionally biased stretch (low complexity) spans 265-274; the sequence is RSSPSAGSSG. 6 disulfides stabilise this stretch: Cys-304/Cys-322, Cys-313/Cys-317, Cys-321/Cys-361, Cys-337/Cys-352, Cys-339/Cys-349, and Cys-344/Cys-345.

The protein belongs to the Wnt family. Palmitoleoylation is required for efficient binding to frizzled receptors. Depalmitoleoylation leads to Wnt signaling pathway inhibition. In terms of tissue distribution, expressed by anchor cell and vulva precursor cell descendants P5.ppa, P5.ppp, P7.paa and P7.pap. Expressed in the tail and weakly expressed in the vulva and body wall muscles.

It is found in the secreted. The protein localises to the extracellular space. Its subcellular location is the extracellular matrix. Functionally, ligand for members of the frizzled family of seven transmembrane receptors. Required in embryonic development for endoderm specification and the correct positioning and orientation of the mitotic spindles and division planes in blastomere cells. Involved in cleavage axis determination. Binds to receptor tyrosine kinase cam-1. Together with wnt ligand lin-44, plays a role in controlling vulva precursor cell P7.p lineage orientation during vulva development, probably by acting as a ligand for tyrosine kinase receptor lin-18. May act redundantly with other Wnt ligands such as cwn-1 and cwn-2 to control seam cell polarity. This is Protein mom-2 (mom-2) from Caenorhabditis elegans.